The chain runs to 150 residues: Ribonuclease P protein subunit p21 (150 aa).

N-acetylalanine is present on Ala2. Positions 62, 65, 92, and 95 each coordinate Zn(2+). The disordered stretch occupies residues 121 to 150; it reads QADINPSEPLPNIADLPKENIQTQALNTSE. Over residues 140 to 150 the composition is skewed to polar residues; sequence NIQTQALNTSE.

It belongs to the eukaryotic/archaeal RNase P protein component 4 family. RNase P consists of a catalytic RNA moiety and about 10 protein subunits; POP1, POP4, POP5, POP7, RPP14, RPP21, RPP25, RPP30, RPP38 and RPP40. Within the RNase P complex, POP1, POP7 and RPP25 form the 'finger' subcomplex, POP5, RPP14, RPP40 and homodimeric RPP30 form the 'palm' subcomplex, and RPP21, POP4 and RPP38 form the 'wrist' subcomplex. All subunits of the RNase P complex interact with the catalytic RNA.

It is found in the nucleus. It localises to the nucleolus. Component of ribonuclease P, a ribonucleoprotein complex that generates mature tRNA molecules by cleaving their 5'-ends. The polypeptide is Ribonuclease P protein subunit p21 (Rpp21) (Mus musculus (Mouse)).